Here is a 406-residue protein sequence, read N- to C-terminus: Transforming growth factor beta regulator 1 (406 aa).

Disordered stretches follow at residues 1–26 (MSVL…RLPK) and 116–144 (GAGP…ENSK). The residue at position 2 (serine 2) is an N-acetylserine. Threonine 13 carries the phosphothreonine modification. The segment covering 134 to 144 (EKKEKGKENSK) has biased composition (basic and acidic residues). Residues 177 to 236 (VFPIGLGGLTVYSLGEIITNRPGFHDENAIYPVGYCSTRVYASMKCPDQKCLYTCQIKDG) enclose the FYR N-terminal domain. The region spanning 237 to 316 (GVQPQFEIVP…QNCVNYQWVK (80 aa)) is the FYR C-terminal domain.

It belongs to the TBRG1 family. In terms of assembly, interacts with CDKN2A and MDM2. Post-translationally, ubiquitinated; mediated by MDM2 and leading to its subsequent proteasomal degradation.

The protein localises to the nucleus. Functionally, acts as a growth inhibitor. Can activate p53/TP53, causes G1 arrest and collaborates with CDKN2A to restrict proliferation, but does not require either protein to inhibit DNA synthesis. Redistributes CDKN2A into the nucleoplasm. Involved in maintaining chromosomal stability. The sequence is that of Transforming growth factor beta regulator 1 (Tbrg1) from Rattus norvegicus (Rat).